The chain runs to 308 residues: MLPTLSVFFMLTFVLLCFLGILANGFIVLMLSREWLLRGRLLPSDMILFSLGTSRFFQQCVGLVNSFYYFLHLVEYSGSLARQLISLHWDFLNSATFWFCTWLSVLFCIKIANFSHPAFLWLKWRFPALVPWFLLGSILVSVIVTLLFFWGNHTIYQAFLRRKFTGNTTFKEWNRRLEIDYFMPLKVVTMSIPCSLFLVSILLLISSLRRHSLRMQHNTHSLQDPNVQAHSRALKSLISFLVLYAVSFVSMIIDATVFISSDNVWYWPWQIILYFCMSVHPFILITNNLRFRGTFRQLLLLARGFWVA.

The Extracellular portion of the chain corresponds to 1 to 7; it reads MLPTLSV. The chain crosses the membrane as a helical span at residues 8-28; sequence FFMLTFVLLCFLGILANGFIV. At 29-60 the chain is on the cytoplasmic side; the sequence is LMLSREWLLRGRLLPSDMILFSLGTSRFFQQC. The chain crosses the membrane as a helical span at residues 61–81; that stretch reads VGLVNSFYYFLHLVEYSGSLA. Topologically, residues 82–88 are extracellular; the sequence is RQLISLH. A helical transmembrane segment spans residues 89 to 109; it reads WDFLNSATFWFCTWLSVLFCI. Over 110 to 128 the chain is Cytoplasmic; sequence KIANFSHPAFLWLKWRFPA. The chain crosses the membrane as a helical span at residues 129 to 149; it reads LVPWFLLGSILVSVIVTLLFF. Residues 150 to 186 are Extracellular-facing; it reads WGNHTIYQAFLRRKFTGNTTFKEWNRRLEIDYFMPLK. N-linked (GlcNAc...) asparagine glycosylation is found at Asn152 and Asn167. Residues 187-207 traverse the membrane as a helical segment; the sequence is VVTMSIPCSLFLVSILLLISS. The Cytoplasmic segment spans residues 208 to 239; that stretch reads LRRHSLRMQHNTHSLQDPNVQAHSRALKSLIS. The chain crosses the membrane as a helical span at residues 240–260; the sequence is FLVLYAVSFVSMIIDATVFIS. Residues 261–264 are Extracellular-facing; that stretch reads SDNV. A helical membrane pass occupies residues 265-285; that stretch reads WYWPWQIILYFCMSVHPFILI. Over 286-308 the chain is Cytoplasmic; that stretch reads TNNLRFRGTFRQLLLLARGFWVA.

The protein belongs to the G-protein coupled receptor T2R family. Expressed in subsets of taste receptor cells of the tongue and palate epithelium and exclusively in gustducin-positive cells.

It localises to the membrane. In terms of biological role, receptor that may play a role in the perception of bitterness and is gustducin-linked. May play a role in sensing the chemical composition of the gastrointestinal content. The activity of this receptor may stimulate alpha gustducin, mediate PLC-beta-2 activation and lead to the gating of TRPM5. The protein is Taste receptor type 2 member 41 (Tas2r41) of Mus musculus (Mouse).